A 276-amino-acid polypeptide reads, in one-letter code: Transmembrane protein 53 (276 aa).

Residues 170–190 form a helical membrane-spanning segment; sequence LLLLAAFALVVILFHFLLAPF.

This sequence belongs to the TMEM53 family. As to expression, expressed in liver (at protein level).

It is found in the nucleus outer membrane. In terms of biological role, negatively regulates bone morphogenetic protein (BMP) signaling in osteoblast lineage cells by blocking cytoplasm-nucleus translocation of phosphorylated SMAD1/5/9 proteins. The sequence is that of Transmembrane protein 53 (Tmem53) from Mus musculus (Mouse).